We begin with the raw amino-acid sequence, 786 residues long: Cadherin-9 (786 aa).

The first 21 residues, 1–21, serve as a signal peptide directing secretion; it reads MRTYSCLQLVIWTCIFHMVDN. N-linked (GlcNAc...) asparagine glycosylation occurs at N21. Residues 22–52 constitute a propeptide that is removed on maturation; it reads STLQGKDSSHFLRRIVNLKKDEGKMLHRAKR. Residues 22-614 lie on the Extracellular side of the membrane; it reads STLQGKDSSH…MLAAGLSTGA (593 aa). 5 Cadherin domains span residues 54-158, 159-267, 268-382, 383-487, and 487-604; these read WMWN…EPKF, TKDL…PPRF, PQST…PPVF, SKLS…APEF, and FATY…AEAL. N-linked (GlcNAc...) asparagine glycosylation is present at N254. N-linked (GlcNAc...) asparagine glycans are attached at residues N454 and N535. The helical transmembrane segment at 615–635 threads the bilayer; that stretch reads LIAILLCVVILLTLIVLFAAL. Topologically, residues 636–786 are cytoplasmic; the sequence is KRQRKKEPLI…AEMYGGNDSD (151 aa). The residue at position 785 (S785) is a Phosphoserine.

Its subcellular location is the cell membrane. In terms of biological role, cadherins are calcium-dependent cell adhesion proteins. They preferentially interact with themselves in a homophilic manner in connecting cells; cadherins may thus contribute to the sorting of heterogeneous cell types. This Mus musculus (Mouse) protein is Cadherin-9 (Cdh9).